The chain runs to 378 residues: Succinyl-diaminopimelate desuccinylase (378 aa).

His68 is a Zn(2+) binding site. Asp70 is a catalytic residue. Asp101 lines the Zn(2+) pocket. Catalysis depends on Glu135, which acts as the Proton acceptor. Zn(2+) is bound by residues Glu136, Glu164, and His350.

It belongs to the peptidase M20A family. DapE subfamily. In terms of assembly, homodimer. The cofactor is Zn(2+). Requires Co(2+) as cofactor.

It catalyses the reaction N-succinyl-(2S,6S)-2,6-diaminopimelate + H2O = (2S,6S)-2,6-diaminopimelate + succinate. Its pathway is amino-acid biosynthesis; L-lysine biosynthesis via DAP pathway; LL-2,6-diaminopimelate from (S)-tetrahydrodipicolinate (succinylase route): step 3/3. In terms of biological role, catalyzes the hydrolysis of N-succinyl-L,L-diaminopimelic acid (SDAP), forming succinate and LL-2,6-diaminopimelate (DAP), an intermediate involved in the bacterial biosynthesis of lysine and meso-diaminopimelic acid, an essential component of bacterial cell walls. The polypeptide is Succinyl-diaminopimelate desuccinylase (Vibrio campbellii (strain ATCC BAA-1116)).